The chain runs to 156 residues: ATP synthase subunit b', chloroplastic (156 aa).

Residues 24–44 traverse the membrane as a helical segment; that stretch reads ATLPLVAIQFILLMVTLNIIL.

The protein belongs to the ATPase B chain family. As to quaternary structure, F-type ATPases have 2 components, F(1) - the catalytic core - and F(0) - the membrane proton channel. F(1) has five subunits: alpha(3), beta(3), gamma(1), delta(1), epsilon(1). F(0) has four main subunits: a(1), b(1), b'(1) and c(10-14). The alpha and beta chains form an alternating ring which encloses part of the gamma chain. F(1) is attached to F(0) by a central stalk formed by the gamma and epsilon chains, while a peripheral stalk is formed by the delta, b and b' chains.

Its subcellular location is the plastid. It localises to the chloroplast thylakoid membrane. F(1)F(0) ATP synthase produces ATP from ADP in the presence of a proton or sodium gradient. F-type ATPases consist of two structural domains, F(1) containing the extramembraneous catalytic core and F(0) containing the membrane proton channel, linked together by a central stalk and a peripheral stalk. During catalysis, ATP synthesis in the catalytic domain of F(1) is coupled via a rotary mechanism of the central stalk subunits to proton translocation. In terms of biological role, component of the F(0) channel, it forms part of the peripheral stalk, linking F(1) to F(0). The b'-subunit is a diverged and duplicated form of b found in plants and photosynthetic bacteria. The protein is ATP synthase subunit b', chloroplastic of Thalassiosira pseudonana (Marine diatom).